The chain runs to 1187 residues: DNA-directed RNA polymerase subunit beta (1187 aa).

The segment at 1150 to 1187 (KDEDDDPASSADDLGFNIGARPDAAAKEDQKAEEPEYQ) is disordered. Residues 1173–1187 (AAAKEDQKAEEPEYQ) are compositionally biased toward basic and acidic residues.

It belongs to the RNA polymerase beta chain family. The RNAP catalytic core consists of 2 alpha, 1 beta, 1 beta' and 1 omega subunit. When a sigma factor is associated with the core the holoenzyme is formed, which can initiate transcription.

It carries out the reaction RNA(n) + a ribonucleoside 5'-triphosphate = RNA(n+1) + diphosphate. Its function is as follows. DNA-dependent RNA polymerase catalyzes the transcription of DNA into RNA using the four ribonucleoside triphosphates as substrates. In Bifidobacterium longum (strain DJO10A), this protein is DNA-directed RNA polymerase subunit beta.